Consider the following 238-residue polypeptide: Gem-associated protein 8 (238 aa).

Residues 66-127 (AGHPWDSQGQ…LESDSDDEVE (62 aa)) form a disordered region. Composition is skewed to polar residues over residues 72–82 (SQGQHMAQQES) and 96–108 (LRNS…STRG). Residues 113-127 (CEEEELESDSDDEVE) are compositionally biased toward acidic residues. S122 carries the phosphoserine modification. Positions 131–164 (SNMEITEELRQYFAQTERHREERRRQQQLDAERL) form a coiled coil.

As to quaternary structure, part of the core SMN complex that contains SMN1, GEMIN2/SIP1, DDX20/GEMIN3, GEMIN4, GEMIN5, GEMIN6, GEMIN7, GEMIN8 and STRAP/UNRIP. Part of the SMN-Sm complex that contains SMN1, GEMIN2/SIP1, DDX20/GEMIN3, GEMIN4, GEMIN5, GEMIN6, GEMIN7, GEMIN8, STRAP/UNRIP and the Sm proteins SNRPB, SNRPD1, SNRPD2, SNRPD3, SNRPE, SNRPF and SNRPG. Interacts with GEMIN6; the interaction is direct. Interacts with GEMIN7; the interaction is direct. Interacts with SMN1; the interaction is direct. Interacts with GEMIN4; the interaction is direct. In terms of tissue distribution, widely expressed in embryonic tissues (at protein level).

The protein localises to the nucleus. Its subcellular location is the gem. The protein resides in the cytoplasm. The SMN complex catalyzes the assembly of small nuclear ribonucleoproteins (snRNPs), the building blocks of the spliceosome, and thereby plays an important role in the splicing of cellular pre-mRNAs. Most spliceosomal snRNPs contain a common set of Sm proteins SNRPB, SNRPD1, SNRPD2, SNRPD3, SNRPE, SNRPF and SNRPG that assemble in a heptameric protein ring on the Sm site of the small nuclear RNA to form the core snRNP (Sm core). In the cytosol, the Sm proteins SNRPD1, SNRPD2, SNRPE, SNRPF and SNRPG are trapped in an inactive 6S pICln-Sm complex by the chaperone CLNS1A that controls the assembly of the core snRNP. To assemble core snRNPs, the SMN complex accepts the trapped 5Sm proteins from CLNS1A forming an intermediate. Binding of snRNA inside 5Sm triggers eviction of the SMN complex, thereby allowing binding of SNRPD3 and SNRPB to complete assembly of the core snRNP. The chain is Gem-associated protein 8 (Gemin8) from Mus musculus (Mouse).